A 512-amino-acid chain; its full sequence is MATLLATPIFSPLASSPARNRLSCSKIRFGSKNGKILNSDGAQKLNLSKFRKPDGQRFLQMGSSKEMNFERKLSVQAMDGAGTGNTSTISRNVIAISHLLVSLGIILAADYFLKQAFVAASIKFPSALFGMFCIFSVLMIFDSVVPAAANGLMNFFEPAFLFIQRWLPLFYVPSLVVLPLSVRDIPAASGVKICYIVAGGWLASLCVAGYTAIAVRKMVKTEMTEAEPMAKPSPFSTLELWSWSGIFVVSFVGALFYPNSLGTSARTSLPFLLSSTVLGYIVGSGLPSSIKKVFHPIICCALSAVLAALAFGYASGSGLDPVLGNYLTKVASDPGAGDILMGFLGSVILSFAFSMFKQRKLVKRHAAEIFTSVIVSTVFSLYSTALVGRLVGLEPSLTVSILPRCITVALALSIVSLFEGTNSSLTAAVVVVTGLIGANFVQVVLDKLRLRDPIARGIATASSAHGLGTAALSAKEPEALPFCAIAYALTGIFGSLLCSVPAVRQSLLAVVG.

Residues 1–76 constitute a chloroplast transit peptide; that stretch reads MATLLATPIF…MNFERKLSVQ (76 aa). A77 is subject to N-acetylalanine. The next 12 membrane-spanning stretches (helical) occupy residues 93–113, 127–147, 160–180, 195–215, 238–258, 270–290, 293–313, 336–356, 367–387, 398–418, 425–445, and 480–500; these read VIAI…DYFL, ALFG…VVPA, FLFI…VLPL, YIVA…AIAV, LELW…LFYP, PFLL…PSSI, VFHP…AFGY, AGDI…FSMF, AEIF…TALV, TVSI…VSLF, LTAA…QVVL, and LPFC…LCSV.

It belongs to the CidB/LrgB family. As to expression, expressed in leaves, stems and flowers, but not in roots.

Its subcellular location is the plastid. It is found in the chloroplast membrane. Glycolate/glycerate transporter required for photorespiration. The sequence is that of Plastidal glycolate/glycerate translocator 1, chloroplastic (PLGG1) from Arabidopsis thaliana (Mouse-ear cress).